The sequence spans 282 residues: Sirohydrochlorin cobaltochelatase CbiKC (282 aa).

The Proton acceptor role is filled by H166. Residues H166 and H228 each contribute to the Co(2+) site.

It belongs to the CbiK family.

The protein localises to the cytoplasm. The enzyme catalyses Co-sirohydrochlorin + 2 H(+) = sirohydrochlorin + Co(2+). It catalyses the reaction siroheme + 2 H(+) = sirohydrochlorin + Fe(2+). Its pathway is cofactor biosynthesis; adenosylcobalamin biosynthesis; cob(II)yrinate a,c-diamide from sirohydrochlorin (anaerobic route): step 1/10. It participates in porphyrin-containing compound metabolism; siroheme biosynthesis; siroheme from sirohydrochlorin: step 1/1. Functionally, catalyzes the insertion of Co(2+) into sirohydrochlorin as part of the anaerobic pathway to cobalamin biosynthesis. To a lesser extent, is also able to insert Fe(2+) into sirohydrochlorin, yielding siroheme. The protein is Sirohydrochlorin cobaltochelatase CbiKC (cbiKc) of Nitratidesulfovibrio vulgaris (strain ATCC 29579 / DSM 644 / CCUG 34227 / NCIMB 8303 / VKM B-1760 / Hildenborough) (Desulfovibrio vulgaris).